The following is an 867-amino-acid chain: Alanine--tRNA ligase (867 aa).

4 residues coordinate Zn(2+): H556, H560, C658, and H662.

Belongs to the class-II aminoacyl-tRNA synthetase family. The cofactor is Zn(2+).

Its subcellular location is the cytoplasm. It catalyses the reaction tRNA(Ala) + L-alanine + ATP = L-alanyl-tRNA(Ala) + AMP + diphosphate. Catalyzes the attachment of alanine to tRNA(Ala) in a two-step reaction: alanine is first activated by ATP to form Ala-AMP and then transferred to the acceptor end of tRNA(Ala). Also edits incorrectly charged Ser-tRNA(Ala) and Gly-tRNA(Ala) via its editing domain. This Fusobacterium nucleatum subsp. nucleatum (strain ATCC 25586 / DSM 15643 / BCRC 10681 / CIP 101130 / JCM 8532 / KCTC 2640 / LMG 13131 / VPI 4355) protein is Alanine--tRNA ligase.